The primary structure comprises 111 residues: MGMPNLGDMMKQIQKAGEKMQDVQNQLEKLVAHGESGGGMVKVSVSGKQKLLSLRIDPEIMDDAEMVQDLVIAAVNNALDASAALAQEEISKAAGGMINPADILKNMNLGK.

It belongs to the YbaB/EbfC family. As to quaternary structure, homodimer.

The protein resides in the cytoplasm. Its subcellular location is the nucleoid. In terms of biological role, binds to DNA and alters its conformation. May be involved in regulation of gene expression, nucleoid organization and DNA protection. The sequence is that of Nucleoid-associated protein Clim_0875 from Chlorobium limicola (strain DSM 245 / NBRC 103803 / 6330).